Consider the following 147-residue polypeptide: Nucleoside diphosphate kinase (147 aa).

Positions 9, 57, 85, 91, 102, and 112 each coordinate ATP. The Pros-phosphohistidine intermediate role is filled by H115.

The protein belongs to the NDK family. In terms of assembly, homotetramer. Mg(2+) serves as cofactor.

The protein localises to the cytoplasm. The catalysed reaction is a 2'-deoxyribonucleoside 5'-diphosphate + ATP = a 2'-deoxyribonucleoside 5'-triphosphate + ADP. The enzyme catalyses a ribonucleoside 5'-diphosphate + ATP = a ribonucleoside 5'-triphosphate + ADP. Functionally, major role in the synthesis of nucleoside triphosphates other than ATP. The ATP gamma phosphate is transferred to the NDP beta phosphate via a ping-pong mechanism, using a phosphorylated active-site intermediate. The chain is Nucleoside diphosphate kinase from Fervidobacterium nodosum (strain ATCC 35602 / DSM 5306 / Rt17-B1).